A 142-amino-acid polypeptide reads, in one-letter code: 5-hydroxymethyl-dUMP N-hydrolase (142 aa).

5-hydroxymethyl-dUMP contacts are provided by G7, I9, R10, G11, S78, G80, E84, and S108.

Belongs to the 2'-deoxynucleoside 5'-phosphate N-hydrolase 1 family. Monomer and homodimer.

The protein localises to the cytoplasm. It is found in the nucleus. The enzyme catalyses 5-hydroxymethyl-dUMP + H2O = 5-hydroxymethyluracil + 2-deoxy-D-ribose 5-phosphate. Functionally, part of a nucleotide salvage pathway that eliminates epigenetically modified 5-hydroxymethyl-dCMP (hmdCMP) in a two-step process entailing deamination to cytotoxic 5-hydroxymethyl-dUMP (hmdUMP), followed by its hydrolysis into 5-hydroxymethyluracil (hmU) and 2-deoxy-D-ribose 5-phosphate (deoxyribosephosphate). Catalyzes the second step in that pathway, the hydrolysis of the N-glycosidic bond in hmdUMP, degrading this cytotoxic nucleotide to avoid its genomic integration. This chain is 5-hydroxymethyl-dUMP N-hydrolase (dnph1), found in Tetraodon nigroviridis (Spotted green pufferfish).